The primary structure comprises 213 residues: Large ribosomal subunit protein uL3 (213 aa).

The protein belongs to the universal ribosomal protein uL3 family. Part of the 50S ribosomal subunit. Forms a cluster with proteins L14 and L19.

One of the primary rRNA binding proteins, it binds directly near the 3'-end of the 23S rRNA, where it nucleates assembly of the 50S subunit. The protein is Large ribosomal subunit protein uL3 of Bifidobacterium adolescentis (strain ATCC 15703 / DSM 20083 / NCTC 11814 / E194a).